The primary structure comprises 220 residues: MAKNRFNQHWLHDHINDPYVKMAQREGYRARAAYKLKEIDEQDKLIRPGQVIVDLGATPGSWSQYARNKLAQGKKRDAEREGGIDGTIVALDILPMEPIADVHFLQGDFREDDVLHQLEEVLEGRAVDLVISDMAPNLSGVASADAARIEHLCDLALEFAQNHLKPDGALLVKCFHGSGYSQIVEKFKQQFKVVAPRKPKASRDKSSETFILGRQLKHPR.

S-adenosyl-L-methionine contacts are provided by glycine 60, tryptophan 62, aspartate 92, aspartate 108, and aspartate 133. Lysine 173 acts as the Proton acceptor in catalysis. The segment at 198–220 (KPKASRDKSSETFILGRQLKHPR) is disordered.

The protein belongs to the class I-like SAM-binding methyltransferase superfamily. RNA methyltransferase RlmE family.

It localises to the cytoplasm. The enzyme catalyses uridine(2552) in 23S rRNA + S-adenosyl-L-methionine = 2'-O-methyluridine(2552) in 23S rRNA + S-adenosyl-L-homocysteine + H(+). Functionally, specifically methylates the uridine in position 2552 of 23S rRNA at the 2'-O position of the ribose in the fully assembled 50S ribosomal subunit. In Burkholderia cenocepacia (strain HI2424), this protein is Ribosomal RNA large subunit methyltransferase E.